Reading from the N-terminus, the 489-residue chain is MGQINRKFSEKQFLLFVVNYIAGFGFIATAISLFRLGPFSWLIFLLVSLVSLIVTLSFARLSSIDSQNYGGPYLWAKKAVDKEKIAGRMFSFFTGWNNFIIGPLSAATAPLFILNSFSGIDGIRGNLVNTWILIAIGFSFYVLLAFISTKGTSLNKKLIALFASVKWIVILSALIVAIYVIARDGNGYSQNNNLESGFFGRREISFAQIATVFITFFYSYAGVEDISVMTPDVKTNNFRKILIVSFIAVFLFYFIGIIILNGLQNIAQRGGEANSIGNVADIFKKAAGLGTLIFYGVGALFNNVSTRLSTIIANSRKILPLAYDNYLPSFFYKQNKKGEFQNAIWFTFGTTLIAMTLLVFIPLVASNFDFDNATEYAASVGSAATLLQYIFVFFIIFKFIYKKEPLYQKKWVKTTEELLFCLGTIVIVLMLLVYLFPVIDGFSKWETKHTLTIVLYGVLSLIGLVLFLLQEYKHKNKQNANKQTTQTTV.

12 helical membrane passes run 14–34 (LLFV…ISLF), 36–56 (LGPF…IVTL), 100–120 (IIGP…FSGI), 127–147 (LVNT…LAFI), 158–178 (LIAL…IVAI), 203–223 (EISF…YAGV), 241–261 (ILIV…IILN), 286–306 (AAGL…NVST), 344–364 (IWFT…IPLV), 380–400 (VGSA…FKFI), 419–439 (LFCL…FPVI), and 449–469 (HTLT…LFLL).

The protein to M.genitalium MG226.

The protein localises to the cell membrane. This is an uncharacterized protein from Mycoplasma genitalium (strain ATCC 33530 / DSM 19775 / NCTC 10195 / G37) (Mycoplasmoides genitalium).